Here is a 274-residue protein sequence, read N- to C-terminus: Proteasome subunit beta type-7-B (274 aa).

Residues 1-37 (MSQSSVDIPPKGGFSFDLCKRNDMLTQKGLKAPSFLK) constitute a propeptide, removed in mature form. The active-site Nucleophile is the Thr40.

This sequence belongs to the peptidase T1B family. Component of the 20S core complex of the 26S proteasome. The 26S proteasome is composed of a core protease (CP), known as the 20S proteasome, capped at one or both ends by the 19S regulatory particle (RP/PA700). The 20S proteasome core is composed of 28 subunits that are arranged in four stacked rings, resulting in a barrel-shaped structure. The two end rings are each formed by seven alpha subunits, and the two central rings are each formed by seven beta subunits. The catalytic chamber with the active sites is on the inside of the barrel.

It localises to the cytoplasm. The protein resides in the nucleus. The catalysed reaction is Cleavage of peptide bonds with very broad specificity.. Functionally, the proteasome is a multicatalytic proteinase complex which is characterized by its ability to cleave peptides with Arg, Phe, Tyr, Leu, and Glu adjacent to the leaving group at neutral or slightly basic pH. The proteasome has an ATP-dependent proteolytic activity. The protein is Proteasome subunit beta type-7-B (PBB2) of Arabidopsis thaliana (Mouse-ear cress).